We begin with the raw amino-acid sequence, 474 residues long: 3-isopropylmalate dehydratase large subunit (474 aa).

Residues C352, C413, and C416 each contribute to the [4Fe-4S] cluster site.

The protein belongs to the aconitase/IPM isomerase family. LeuC type 1 subfamily. As to quaternary structure, heterodimer of LeuC and LeuD. It depends on [4Fe-4S] cluster as a cofactor.

The enzyme catalyses (2R,3S)-3-isopropylmalate = (2S)-2-isopropylmalate. The protein operates within amino-acid biosynthesis; L-leucine biosynthesis; L-leucine from 3-methyl-2-oxobutanoate: step 2/4. Catalyzes the isomerization between 2-isopropylmalate and 3-isopropylmalate, via the formation of 2-isopropylmaleate. This Pseudomonas syringae pv. syringae (strain B728a) protein is 3-isopropylmalate dehydratase large subunit.